A 210-amino-acid chain; its full sequence is Large ribosomal subunit protein uL3 (210 aa).

Positions 131-154 (GPMSHGSKYHRRVGSMGATTDPGR) are disordered.

The protein belongs to the universal ribosomal protein uL3 family. In terms of assembly, part of the 50S ribosomal subunit. Forms a cluster with proteins L14 and L19.

In terms of biological role, one of the primary rRNA binding proteins, it binds directly near the 3'-end of the 23S rRNA, where it nucleates assembly of the 50S subunit. This is Large ribosomal subunit protein uL3 from Thermoanaerobacter pseudethanolicus (strain ATCC 33223 / 39E) (Clostridium thermohydrosulfuricum).